A 499-amino-acid chain; its full sequence is Probable cytosol aminopeptidase (499 aa).

Residues Lys269 and Asp274 each coordinate Mn(2+). Residue Lys281 is part of the active site. Residues Asp292, Asp351, and Glu353 each contribute to the Mn(2+) site. The active site involves Arg355.

It belongs to the peptidase M17 family. The cofactor is Mn(2+).

The protein localises to the cytoplasm. It catalyses the reaction Release of an N-terminal amino acid, Xaa-|-Yaa-, in which Xaa is preferably Leu, but may be other amino acids including Pro although not Arg or Lys, and Yaa may be Pro. Amino acid amides and methyl esters are also readily hydrolyzed, but rates on arylamides are exceedingly low.. It carries out the reaction Release of an N-terminal amino acid, preferentially leucine, but not glutamic or aspartic acids.. Functionally, presumably involved in the processing and regular turnover of intracellular proteins. Catalyzes the removal of unsubstituted N-terminal amino acids from various peptides. This is Probable cytosol aminopeptidase from Haemophilus ducreyi (strain 35000HP / ATCC 700724).